The chain runs to 390 residues: Magnesium-protoporphyrin IX monomethyl ester [oxidative] cyclase (390 aa).

This sequence belongs to the AcsF family. Fe cation is required as a cofactor.

The enzyme catalyses Mg-protoporphyrin IX 13-monomethyl ester + 3 NADPH + 3 O2 + 2 H(+) = 3,8-divinyl protochlorophyllide a + 3 NADP(+) + 5 H2O. The protein operates within porphyrin-containing compound metabolism; chlorophyll biosynthesis (light-independent). In terms of biological role, catalyzes the formation of the isocyclic ring in chlorophyll biosynthesis. Mediates the cyclase reaction, which results in the formation of divinylprotochlorophyllide (Pchlide) characteristic of all chlorophylls from magnesium-protoporphyrin IX 13-monomethyl ester (MgPMME). This is Magnesium-protoporphyrin IX monomethyl ester [oxidative] cyclase from Prochlorococcus marinus (strain AS9601).